A 115-amino-acid chain; its full sequence is NAD(P)H-quinone oxidoreductase subunit M (115 aa).

The protein belongs to the complex I NdhM subunit family. In terms of assembly, NDH-1 can be composed of about 15 different subunits; different subcomplexes with different compositions have been identified which probably have different functions.

It is found in the cellular thylakoid membrane. The enzyme catalyses a plastoquinone + NADH + (n+1) H(+)(in) = a plastoquinol + NAD(+) + n H(+)(out). The catalysed reaction is a plastoquinone + NADPH + (n+1) H(+)(in) = a plastoquinol + NADP(+) + n H(+)(out). Its function is as follows. NDH-1 shuttles electrons from an unknown electron donor, via FMN and iron-sulfur (Fe-S) centers, to quinones in the respiratory and/or the photosynthetic chain. The immediate electron acceptor for the enzyme in this species is believed to be plastoquinone. Couples the redox reaction to proton translocation, and thus conserves the redox energy in a proton gradient. Cyanobacterial NDH-1 also plays a role in inorganic carbon-concentration. This is NAD(P)H-quinone oxidoreductase subunit M from Prochlorococcus marinus (strain MIT 9313).